The following is a 397-amino-acid chain: UDP-GlcNAc:betaGal beta-1,3-N-acetylglucosaminyltransferase 7 (397 aa).

Residues M1–K6 lie on the Cytoplasmic side of the membrane. Residues T7 to Q26 traverse the membrane as a helical segment. Over R27–L397 the chain is Lumenal. 4 N-linked (GlcNAc...) asparagine glycosylation sites follow: N84, N90, N210, and N387.

The protein belongs to the glycosyltransferase 31 family. Strongly expressed in placenta and colon. Moderately expressed in lung, stomach, small intestine and kidney. Very weakly expressed in cerebrum, cerebellum, heart and testis.

The protein localises to the golgi apparatus membrane. The protein operates within protein modification; protein glycosylation. N-acetyl glucosamine (GlcNAc) transferase that catalyzes the transfer of GlcNAc via a beta1-&gt;3 linkage from UDP-GlcNAc to the non-reducing terminal galactose (Gal) in the linearly growing chain of N- and O-linked keratan sulfate proteoglycans. Cooperates with B4GALT4 galactosyltransferase and CHST6 and CHST1 sulfotransferases to construct and elongate mono- and disulfated disaccharide units [-&gt;3Galbeta1-&gt;4(6-sulfoGlcNAcbeta)1-&gt;] and [-&gt;3(6-sulfoGalbeta)1-&gt;4(6-sulfoGlcNAcbeta)1-&gt;] within keratan sulfate polymer. Involved in biosynthesis of N-linked keratan sulfate proteoglycans in cornea, with an impact on proteoglycan fibril organization and corneal transparency. May play a role in the maintenance of tissue architecture by suppressing cellular motility and invasion. The chain is UDP-GlcNAc:betaGal beta-1,3-N-acetylglucosaminyltransferase 7 (B3gnt7) from Mus musculus (Mouse).